Reading from the N-terminus, the 500-residue chain is Na(+)/H(+) antiporter NhaB (500 aa).

Transmembrane regions (helical) follow at residues 13–33 (FLGA…IINP), 34–54 (IAVV…EFIF), 62–82 (CYPL…GLTS), 97–117 (ILLL…LLFI), 129–149 (IVIS…LDAL), 242–262 (FLYV…TVVI), 306–326 (GIVA…VGLV), 350–370 (FEEA…VSVI), 392–412 (PIMF…VFVA), 449–469 (VATP…IAPL), and 477–497 (MVWM…LCVT).

It belongs to the NhaB Na(+)/H(+) (TC 2.A.34) antiporter family.

The protein resides in the cell inner membrane. The enzyme catalyses 2 Na(+)(in) + 3 H(+)(out) = 2 Na(+)(out) + 3 H(+)(in). Functionally, na(+)/H(+) antiporter that extrudes sodium in exchange for external protons. This chain is Na(+)/H(+) antiporter NhaB, found in Marinomonas sp. (strain MWYL1).